Consider the following 77-residue polypeptide: MNKKTLLVIFIVTLLIADEVNSFKFGGFLKKMWKSKLAKKLRAKGKQMLKEYANKVLSPEEEAPAAVPAGAPERRRR.

An N-terminal signal peptide occupies residues Met-1–Ser-22. Positions Arg-74–Arg-77 are excised as a propeptide.

This sequence belongs to the non-disulfide-bridged peptide (NDBP) superfamily. Long chain multifunctional peptide (group 2) family. In terms of tissue distribution, expressed by the venom gland.

The protein resides in the secreted. Antimicrobial peptide. May also inhibit angiotensin-converting enzyme (ACE) and potentiate bradykinin (BK). In Tityus discrepans (Venezuelan scorpion), this protein is Bradykinin-potentiating peptide.